A 411-amino-acid polypeptide reads, in one-letter code: Ribose-phosphate pyrophosphokinase 3, chloroplastic (411 aa).

The transit peptide at 1–39 (MAAISPANATTAASLSLPQFSSTSSSLSSSSSPSFLNFK) directs the protein to the chloroplast. Residues D231 and H233 each contribute to the Mg(2+) site. The interval 314-329 (GRHVVIVDDLVQSGGT) is binding of phosphoribosylpyrophosphate.

Belongs to the ribose-phosphate pyrophosphokinase family.

The protein localises to the plastid. The protein resides in the chloroplast. It carries out the reaction D-ribose 5-phosphate + ATP = 5-phospho-alpha-D-ribose 1-diphosphate + AMP + H(+). In Arabidopsis thaliana (Mouse-ear cress), this protein is Ribose-phosphate pyrophosphokinase 3, chloroplastic (PRS3).